A 272-amino-acid chain; its full sequence is Putative imidazole glycerol phosphate synthase subunit hisF2 (272 aa).

Asp-133 is an active-site residue.

This sequence belongs to the HisA/HisF family. As to quaternary structure, heterodimer of HisH and HisF.

Its subcellular location is the cytoplasm. It carries out the reaction 5-[(5-phospho-1-deoxy-D-ribulos-1-ylimino)methylamino]-1-(5-phospho-beta-D-ribosyl)imidazole-4-carboxamide + L-glutamine = D-erythro-1-(imidazol-4-yl)glycerol 3-phosphate + 5-amino-1-(5-phospho-beta-D-ribosyl)imidazole-4-carboxamide + L-glutamate + H(+). The protein operates within amino-acid biosynthesis; L-histidine biosynthesis; L-histidine from 5-phospho-alpha-D-ribose 1-diphosphate: step 5/9. Its function is as follows. IGPS catalyzes the conversion of PRFAR and glutamine to IGP, AICAR and glutamate. The HisF subunit catalyzes the cyclization activity that produces IGP and AICAR from PRFAR using the ammonia provided by the HisH subunit. This Vibrio vulnificus (strain YJ016) protein is Putative imidazole glycerol phosphate synthase subunit hisF2 (hisF2).